A 764-amino-acid chain; its full sequence is DNA-binding protein SATB1 (764 aa).

The segment covering Met-1–Glu-15 has biased composition (basic and acidic residues). The interval Met-1–Pro-56 is disordered. The Nuclear localization signal signature appears at Val-20 to Leu-40. A compositionally biased stretch (gly residues) spans Gly-43 to Met-52. Lys-51 is covalently cross-linked (Glycyl lysine isopeptide (Lys-Gly) (interchain with G-Cter in SUMO2)). Residues Gly-71–Ser-172 form the CMP domain. An N6-acetyllysine modification is found at Lys-136. The short motif at Pro-139–Ser-143 is the Protein interaction element. The region spanning Lys-175 to Asp-248 is the CUTL domain. A Phosphoserine modification is found at Ser-185. A nuclear matrix targeting sequence (NMTS) region spans residues Tyr-224–Thr-278. Residues Tyr-224–Thr-278 carry the Nuclear matrix targeting sequence (NMTS) motif. Positions His-266 to Val-296 are enriched in polar residues. The segment at His-266–Leu-307 is disordered. The CUT 1 DNA-binding region spans Leu-361–Arg-448. Residues Gln-390, Arg-400–Arg-410, and Asn-425 contribute to the DNA site. Positions Arg-450–Val-474 are disordered. A DNA-binding region (CUT 2) is located at residues Asn-484–Ser-571. Positions Gln-591–Thr-650 are disordered. A compositionally biased stretch (low complexity) spans Gln-593 to Gln-606. The segment covering Gln-607–Gln-629 has biased composition (pro residues). Phosphoserine is present on Ser-638. Residues Thr-646–Gly-705 constitute a DNA-binding region (homeobox). Lys-745 participates in a covalent cross-link: Glycyl lysine isopeptide (Lys-Gly) (interchain with G-Cter in SUMO).

Belongs to the CUT homeobox family. Interacts with PCAF. Interacts with sumoylated PML and HDAC1 Tat via the CMP domain. Also interacts with DYNLT3 and POLR2J2. Binds to EP300. Homodimer. Part of the nuclear protein complex gamma-globin promoter and enhancer binding factor (gamma-PE) composed at least of SATB1 and HOXB2. Interaction with CtBP1 when not acetylated stabilizes attachment to DNA and promotes transcription repression. Interacts with CUX1 (via DNA-binding domains); the interaction inhibits the attachment of both proteins to DNA. In terms of processing, sumoylated. Sumoylation promotes cleavage by caspases. Phosphorylated by PKC. Acetylated by PCAF. Phosphorylated form interacts with HDAC1, but unphosphorylated form interacts with PCAF. DNA binding properties are activated by phosphorylation and inactivated by acetylation. In opposition, gene expression is down-regulated by phosphorylation but up-regulated by acetylation. Post-translationally, cleaved at Asp-254 by caspase-3 and caspase-6 during T-cell apoptosis in thymus and during B-cell stimulation. The cleaved forms cannot dimerize and lose transcription regulation function because of impaired DNA and chromatin association. Expressed in the subventricular zone, rostral migratory stream and in the olfactory bulb (at protein level). Mainly expressed in thymus, spleen, and lymph nodes with a lower level observed in the brain.

It is found in the nucleus. The protein localises to the PML body. Its function is as follows. Required for the switching of fetal globin species, and beta- and gamma-globin genes regulation during erythroid differentiation. Plays a role in chromatin organization and nuclear architecture during apoptosis. Crucial silencing factor contributing to the initiation of X inactivation mediated by Xist RNA that occurs during embryogenesis and in lymphoma. Binds to DNA at special AT-rich sequences, the consensus SATB1-binding sequence (CSBS), at nuclear matrix- or scaffold-associated regions. Thought to recognize the sugar-phosphate structure of double-stranded DNA. Transcriptional repressor controlling nuclear and viral gene expression in a phosphorylated and acetylated status-dependent manner, by binding to matrix attachment regions (MARs) of DNA and inducing a local chromatin-loop remodeling. Acts as a docking site for several chromatin remodeling enzymes and also by recruiting corepressors (HDACs) or coactivators (HATs) directly to promoters and enhancers. Modulates genes that are essential in the maturation of the immune T-cell CD8SP from thymocytes. Promotes neuronal differentiation of neural stem/progenitor cells in the adult subventricular zone, possibly by positively regulating the expression of NEUROD1. In Mus musculus (Mouse), this protein is DNA-binding protein SATB1 (Satb1).